Consider the following 116-residue polypeptide: Small ribosomal subunit protein bS18c (116 aa).

Residues 1–13 (MKPSFRNTSPSFR) show a composition bias toward polar residues. The tract at residues 1 to 51 (MKPSFRNTSPSFRNRSKPYFRNRSKPYFRNRSKPSFRNTSKRFSPNQQSFR) is disordered. Over residues 14–34 (NRSKPYFRNRSKPYFRNRSKP) the composition is skewed to basic residues. The segment covering 35-49 (SFRNTSKRFSPNQQS) has biased composition (polar residues).

It belongs to the bacterial ribosomal protein bS18 family. In terms of assembly, part of the 30S ribosomal subunit.

The protein resides in the plastid. It is found in the chloroplast. This is Small ribosomal subunit protein bS18c from Cryptomeria japonica (Japanese cedar).